Reading from the N-terminus, the 520-residue chain is Signal peptide peptidase-like 2A (520 aa).

The signal sequence occupies residues 1-25 (MGPQRRLSPAGAALLWGFLLQLTAA). At 26 to 172 (QEAILHASGN…PSWPNFDYTM (147 aa)) the chain is on the lumenal side. N-linked (GlcNAc...) asparagine glycosylation is found at Asn58, Asn66, Asn74, Asn116, Asn126, and Asn149. Residues 63 to 151 (SLMNLTSTPL…YKDFRDMNQT (89 aa)) form the PA domain. A glycan (N-linked (GlcNAc...) (complex) asparagine) is linked at Asn155. A helical transmembrane segment spans residues 173–193 (VVIFVIAVFTVALGGYWSGLV). The Cytoplasmic portion of the chain corresponds to 194–220 (ELENLKAVTTEDREMRKKKEEYLTFSP). A helical transmembrane segment spans residues 221-241 (LTVVIFVVICCVMMVLLYFFY). Over 242 to 247 (KWLVYV) the chain is Lumenal. The helical transmembrane segment at 248–268 (MIAIFCIASAMSLYNCLAALI) threads the bilayer. Residues 269 to 285 (HKIPYGQCTIACRGKNM) lie on the Cytoplasmic side of the membrane. The helical transmembrane segment at 286–306 (EVRLIFLSGLCIAVAVVWAVF) threads the bilayer. Residues 307–311 (RNEDR) lie on the Lumenal side of the membrane. The helical transmembrane segment at 312 to 332 (WAWILQDILGIAFCLNLIKTL) threads the bilayer. The Cytoplasmic portion of the chain corresponds to 333 to 340 (KLPNFKSC). Residues 341 to 361 (VILLGLLLLYDVFFVFITPFI) traverse the membrane as a helical segment. Residue Asp351 is part of the active site. Residues 362–399 (TKNGESIMVELAAGPFGNNEKLPVVIRVPKLIYFSVMS) are Lumenal-facing. A helical transmembrane segment spans residues 400 to 420 (VCLMPVSILGFGDIIVPGLLI). The active site involves Asp412. Residues 421 to 437 (AYCRRFDVQTGSSYIYY) are Cytoplasmic-facing. The helical transmembrane segment at 438 to 458 (VSSTVAYAIGMILTFVVLVLM) threads the bilayer. Topologically, residues 459–460 (KK) are lumenal. A helical transmembrane segment spans residues 461–481 (GQPALLYLVPCTLITASVVAW). The short motif at 463–465 (PAL) is the PAL element. Over 482–520 (RRKEMKKFWKGNSYQMMDHLDCATNEENPVISGEQIVQQ) the chain is Cytoplasmic. The short motif at 495–498 (YQMM) is the YXXo lysosomal targeting motif element.

It belongs to the peptidase A22B family. In terms of assembly, interacts with ITM2B. In terms of processing, glycosylated. In terms of tissue distribution, ubiquitous.

The protein localises to the late endosome membrane. It localises to the lysosome membrane. The protein resides in the membrane. Intramembrane-cleaving aspartic protease (I-CLiP) that cleaves type II membrane signal peptides in the hydrophobic plane of the membrane. Functions in FASLG, ITM2B and TNF processing. Catalyzes the intramembrane cleavage of the anchored fragment of shed TNF-alpha (TNF), which promotes the release of the intracellular domain (ICD) for signaling to the nucleus. Also responsible for the intramembrane cleavage of Fas antigen ligand FASLG, which promotes the release of the intracellular FasL domain (FasL ICD). Essential for degradation of the invariant chain CD74 that plays a central role in the function of antigen-presenting cells in the immune system. Plays a role in the regulation of innate and adaptive immunity. Catalyzes the intramembrane cleavage of the simian foamy virus envelope glycoprotein gp130 independently of prior ectodomain shedding by furin or furin-like proprotein convertase (PC)-mediated cleavage proteolysis. This chain is Signal peptide peptidase-like 2A, found in Homo sapiens (Human).